A 517-amino-acid polypeptide reads, in one-letter code: Heat shock 70-related protein 5 (517 aa).

It belongs to the heat shock protein 70 family.

Its function is as follows. May function in protein folding and assembly, and disassembly of protein complexes. The chain is Heat shock 70-related protein 5 from Dictyostelium discoideum (Social amoeba).